Consider the following 671-residue polypeptide: MQNFDLIKQKIKSLVKQLTKANYQYYNLSNPDLSDQQYDALLKELINLETRYPQFKLPYSPTLKIGGFVEKKFSTIKHKTPMMSLGNVFNLEEIKAFYDRIVKKIPTFSLLTELKIDGVAISLKYQKGILVQALTRGNGIWGEDITKNAQTIKTIPLRLKEDLDLEVRGEIYLSHPAFEKLNAQRKQENKPLFSNPRNAASGTLRQLNSAIVAQRNLSIFVYGISDPYLTKPTQKETLVFLTALGFTTNPHYYCVSNFENLLSVIEKYKTIKEQLTYDTDGIVIKINELAFHSLIGATAKAPRWATAYKFATITSQSIVQNIIFQVGRTGVITPVCKIMPVMVDGSLVSKVVLHNYDYICKKDIRIKDHVIVHKAGSVIPEILEVIKSKRTDLQKPTLMIEKCPACQTILEKQPGEVDYFCLNPNCREQKIQKLIHFVSKNAMDINVLGEQTIIAFFDKNLIAKPSDLYLLKKHKHILQEMPGFGAKKITNILDAIEASKQKGFEDVLFALGIKHIGKKVSQVLAKHFQTIENLQQATPELITQIREIGIKIAQSIQQYFSNSCNLEEVSKLKTLGVSFQSTNPQNPTTQTIFTNKKIVLTGTLQKYSRLQIQQILEQMGAIITNSLSLQNNYLIVGINAGSKLTKAQKLQIPIIEEKELQQIIENSQIKL.

NAD(+) contacts are provided by residues 35–39 (DQQYD), 84–85 (SL), and Glu113. The active-site N6-AMP-lysine intermediate is Lys115. NAD(+) contacts are provided by Arg136, Glu170, Lys285, and Lys309. Zn(2+) contacts are provided by Cys403, Cys406, Cys421, and Cys426. The 84-residue stretch at 588–671 (TTQTIFTNKK…QIIENSQIKL (84 aa)) folds into the BRCT domain.

Belongs to the NAD-dependent DNA ligase family. LigA subfamily. It depends on Mg(2+) as a cofactor. The cofactor is Mn(2+).

The catalysed reaction is NAD(+) + (deoxyribonucleotide)n-3'-hydroxyl + 5'-phospho-(deoxyribonucleotide)m = (deoxyribonucleotide)n+m + AMP + beta-nicotinamide D-nucleotide.. In terms of biological role, DNA ligase that catalyzes the formation of phosphodiester linkages between 5'-phosphoryl and 3'-hydroxyl groups in double-stranded DNA using NAD as a coenzyme and as the energy source for the reaction. It is essential for DNA replication and repair of damaged DNA. This is DNA ligase from Onion yellows phytoplasma (strain OY-M).